We begin with the raw amino-acid sequence, 347 residues long: Gamma-glutamyl hydrolase B (347 aa).

A signal peptide spans 1 to 22 (MIKLFSLFIYLYLISNLKLINT). A Gamma-glutamyl hydrolase domain is found at 23–314 (INNTPVIGIL…THVEQIYIFN (292 aa)). Cys128 serves as the catalytic Nucleophile. N-linked (GlcNAc...) asparagine glycosylation is found at Asn152, Asn158, and Asn201. The active-site Proton donor is the His240. Residues Asn273, Asn314, and Asn318 are each glycosylated (N-linked (GlcNAc...) asparagine).

This sequence belongs to the peptidase C26 family.

The protein localises to the secreted. The protein resides in the extracellular space. It catalyses the reaction (6S)-5,6,7,8-tetrahydrofolyl-(gamma-L-Glu)(n) + (n-1) H2O = (6S)-5,6,7,8-tetrahydrofolate + (n-1) L-glutamate. This is Gamma-glutamyl hydrolase B (gghB) from Dictyostelium discoideum (Social amoeba).